Reading from the N-terminus, the 574-residue chain is Proline--tRNA ligase (574 aa).

It belongs to the class-II aminoacyl-tRNA synthetase family. ProS type 1 subfamily. In terms of assembly, homodimer.

It localises to the cytoplasm. It catalyses the reaction tRNA(Pro) + L-proline + ATP = L-prolyl-tRNA(Pro) + AMP + diphosphate. Catalyzes the attachment of proline to tRNA(Pro) in a two-step reaction: proline is first activated by ATP to form Pro-AMP and then transferred to the acceptor end of tRNA(Pro). As ProRS can inadvertently accommodate and process non-cognate amino acids such as alanine and cysteine, to avoid such errors it has two additional distinct editing activities against alanine. One activity is designated as 'pretransfer' editing and involves the tRNA(Pro)-independent hydrolysis of activated Ala-AMP. The other activity is designated 'posttransfer' editing and involves deacylation of mischarged Ala-tRNA(Pro). The misacylated Cys-tRNA(Pro) is not edited by ProRS. This Pseudoalteromonas translucida (strain TAC 125) protein is Proline--tRNA ligase.